Here is a 113-residue protein sequence, read N- to C-terminus: UPF0122 protein SSU98_0878 (113 aa).

It belongs to the UPF0122 family.

Functionally, might take part in the signal recognition particle (SRP) pathway. This is inferred from the conservation of its genetic proximity to ftsY/ffh. May be a regulatory protein. In Streptococcus suis (strain 98HAH33), this protein is UPF0122 protein SSU98_0878.